Consider the following 258-residue polypeptide: Shikimate dehydrogenase (NADP(+)) (258 aa).

Shikimate-binding positions include 14–16 (SES) and Thr-61. Catalysis depends on Lys-65, which acts as the Proton acceptor. Shikimate contacts are provided by Asn-86 and Asp-101. NADP(+) is bound by residues 125–129 (GSGGS) and Leu-211. Tyr-213 contributes to the shikimate binding site. Gly-234 is a binding site for NADP(+).

This sequence belongs to the shikimate dehydrogenase family. In terms of assembly, homodimer.

It carries out the reaction shikimate + NADP(+) = 3-dehydroshikimate + NADPH + H(+). It participates in metabolic intermediate biosynthesis; chorismate biosynthesis; chorismate from D-erythrose 4-phosphate and phosphoenolpyruvate: step 4/7. Its function is as follows. Involved in the biosynthesis of the chorismate, which leads to the biosynthesis of aromatic amino acids. Catalyzes the reversible NADPH linked reduction of 3-dehydroshikimate (DHSA) to yield shikimate (SA). The chain is Shikimate dehydrogenase (NADP(+)) from Clostridium botulinum (strain 657 / Type Ba4).